The primary structure comprises 436 residues: Hydroxycinnamoyltransferase (436 aa).

Active-site proton acceptor residues include histidine 154 and aspartate 383.

This sequence belongs to the plant acyltransferase family. In terms of tissue distribution, mostly expressed in stems, and, to a lower extent, in bulbs.

It participates in phenylpropanoid metabolism. Its function is as follows. Hydroxycinnamoyl transferase that catalyzes the transfer of an acyl from p-coumaryol-CoA to various acyl acceptors. Can use feruloyl-CoA and caffeoyl-CoA as acyl donors. This chain is Hydroxycinnamoyltransferase, found in Narcissus pseudonarcissus (Daffodil).